A 528-amino-acid chain; its full sequence is Glutamyl-tRNA(Gln) amidotransferase subunit B, mitochondrial (528 aa).

It belongs to the GatB/GatE family. GatB subfamily. As to quaternary structure, subunit of the heterotrimeric GatFAB amidotransferase (AdT) complex, composed of A, B and F subunits.

The protein resides in the mitochondrion. It carries out the reaction L-glutamyl-tRNA(Gln) + L-glutamine + ATP + H2O = L-glutaminyl-tRNA(Gln) + L-glutamate + ADP + phosphate + H(+). Allows the formation of correctly charged Gln-tRNA(Gln) through the transamidation of misacylated Glu-tRNA(Gln) in the mitochondria. The reaction takes place in the presence of glutamine and ATP through an activated gamma-phospho-Glu-tRNA(Gln). The polypeptide is Glutamyl-tRNA(Gln) amidotransferase subunit B, mitochondrial (Clavispora lusitaniae (strain ATCC 42720) (Yeast)).